A 306-amino-acid polypeptide reads, in one-letter code: Phosphatidylserine decarboxylase proenzyme (306 aa).

Residues Asp98, His155, and Ser259 each act as charge relay system; for autoendoproteolytic cleavage activity in the active site. Ser259 serves as the catalytic Schiff-base intermediate with substrate; via pyruvic acid; for decarboxylase activity. Ser259 carries the pyruvic acid (Ser); by autocatalysis modification.

Belongs to the phosphatidylserine decarboxylase family. PSD-B subfamily. Prokaryotic type I sub-subfamily. As to quaternary structure, heterodimer of a large membrane-associated beta subunit and a small pyruvoyl-containing alpha subunit. It depends on pyruvate as a cofactor. In terms of processing, is synthesized initially as an inactive proenzyme. Formation of the active enzyme involves a self-maturation process in which the active site pyruvoyl group is generated from an internal serine residue via an autocatalytic post-translational modification. Two non-identical subunits are generated from the proenzyme in this reaction, and the pyruvate is formed at the N-terminus of the alpha chain, which is derived from the carboxyl end of the proenzyme. The autoendoproteolytic cleavage occurs by a canonical serine protease mechanism, in which the side chain hydroxyl group of the serine supplies its oxygen atom to form the C-terminus of the beta chain, while the remainder of the serine residue undergoes an oxidative deamination to produce ammonia and the pyruvoyl prosthetic group on the alpha chain. During this reaction, the Ser that is part of the protease active site of the proenzyme becomes the pyruvoyl prosthetic group, which constitutes an essential element of the active site of the mature decarboxylase.

Its subcellular location is the cell membrane. It carries out the reaction a 1,2-diacyl-sn-glycero-3-phospho-L-serine + H(+) = a 1,2-diacyl-sn-glycero-3-phosphoethanolamine + CO2. Its pathway is phospholipid metabolism; phosphatidylethanolamine biosynthesis; phosphatidylethanolamine from CDP-diacylglycerol: step 2/2. Functionally, catalyzes the formation of phosphatidylethanolamine (PtdEtn) from phosphatidylserine (PtdSer). This is Phosphatidylserine decarboxylase proenzyme from Nitrosococcus oceani (strain ATCC 19707 / BCRC 17464 / JCM 30415 / NCIMB 11848 / C-107).